A 616-amino-acid polypeptide reads, in one-letter code: Sialic acid TRAP transporter permease protein SiaT (616 aa).

The tract at residues 1 to 190 is TRAP transporter small permease; that stretch reads MKYINKLEEW…RISNYIKLGS (190 aa). The next 17 membrane-spanning stretches (helical) occupy residues 9–29, 36–56, 83–103, 117–137, 153–173, 195–215, 244–264, 288–308, 332–352, 357–377, 407–427, 431–451, 459–479, 505–525, 527–547, 552–572, and 587–607; these read EWLGGTLFIAIFGILIAQILS, PLIWSEELAKLLFVYVGMLGI, TNTFVQLLVFVCIFLFIHFGI, GGISEKWIFAALPVIAILMMF, YLPATFFIISAVILFAILFFA, IALLVWLIIMFIGVPVGWSLF, FPLLAVPFYILTGILMNTGGI, IGASLLFSGMSGSALADAGGL, ASCIIGPLVPPSIAMIIYGVI, IAKLFIAGFIPGVLITLALMA, FWAILTPLLIIGGIFSGLFSP, AIVAAAYSIIIGKFVYKELTL, IEAMAITGVVALMIMTVTFFG, VLVMINALLLFLGMFIDALAL, FLVLPMLIPIAMQFNIDLIFF, TLNMMIGILTPPMGMALFVVA, and LPFLIPVFVTLVLITIFPQII. Residues 191–616 form a TRAP transporter large permease region; it reads SSVYIALLVW…ITFVPNLLIP (426 aa).

It in the N-terminal section; belongs to the TRAP transporter small permease family. The protein in the C-terminal section; belongs to the TRAP transporter large permease family. The complex comprises the extracytoplasmic solute receptor protein SiaP, and the fused transmembrane protein SiaT.

It localises to the cell inner membrane. Part of the tripartite ATP-independent periplasmic (TRAP) transport system SiaPT involved in the uptake of sialic acid. The chain is Sialic acid TRAP transporter permease protein SiaT (siaT) from Haemophilus influenzae (strain 86-028NP).